The following is a 569-amino-acid chain: Glutamate--tRNA ligase (569 aa).

The 'HIGH' region motif lies at 110–120 (PNPNGPPTLGS).

Belongs to the class-I aminoacyl-tRNA synthetase family. Glutamate--tRNA ligase type 2 subfamily.

It localises to the cytoplasm. The enzyme catalyses tRNA(Glu) + L-glutamate + ATP = L-glutamyl-tRNA(Glu) + AMP + diphosphate. Functionally, catalyzes the attachment of glutamate to tRNA(Glu) in a two-step reaction: glutamate is first activated by ATP to form Glu-AMP and then transferred to the acceptor end of tRNA(Glu). This Methanococcoides burtonii (strain DSM 6242 / NBRC 107633 / OCM 468 / ACE-M) protein is Glutamate--tRNA ligase.